A 483-amino-acid chain; its full sequence is Zinc metalloproteinase/disintegrin (483 aa).

An N-terminal signal peptide occupies residues methionine 1 to serine 20. The propeptide occupies isoleucine 21–glutamate 191. Residues arginine 198–proline 394 form the Peptidase M12B domain. Ca(2+) is bound by residues glutamate 201 and aspartate 285. 3 cysteine pairs are disulfide-bonded: cysteine 309–cysteine 389, cysteine 349–cysteine 373, and cysteine 351–cysteine 356. Position 334 (histidine 334) interacts with Zn(2+). Residue glutamate 335 is part of the active site. Positions 338 and 344 each coordinate Zn(2+). Cysteine 389 and asparagine 392 together coordinate Ca(2+). Residues leucine 395–glutamate 414 constitute a propeptide that is removed on maturation. The region spanning threonine 402 to alanine 483 is the Disintegrin domain. Cystine bridges form between cysteine 425–cysteine 448, cysteine 439–cysteine 445, cysteine 444–cysteine 469, and cysteine 457–cysteine 476. A Cell attachment site; atypical (KGD) motif is present at residues lysine 461–aspartate 463.

The protein belongs to the venom metalloproteinase (M12B) family. P-II subfamily. P-IIe sub-subfamily. In terms of assembly, heterodimer with piscivostatin-alpha; disulfide-linked (disintegrin). Requires Zn(2+) as cofactor. In terms of tissue distribution, expressed by the venom gland.

It is found in the secreted. Functionally, impairs hemostasis in the envenomed animal. In terms of biological role, inhibits platelet aggregation induced by ADP. Acts by inhibiting fibrinogen interaction with platelet receptors GPIIb/GPIIIa (ITGA2B/ITGB3). Also inhibits platelet aggregate dissociation in human platelet-rich plasma. The sequence is that of Zinc metalloproteinase/disintegrin from Agkistrodon piscivorus piscivorus (Eastern cottonmouth).